The following is a 123-amino-acid chain: Protein Wnt-7(I) (123 aa).

Residue Ser1 is the site of O-palmitoleoyl serine; by PORCN attachment. Residues Cys89 and Cys104 are joined by a disulfide bond. N-linked (GlcNAc...) asparagine glycosylation is present at Asn90. Residues 121–123 carry the Microbody targeting signal motif; the sequence is CKF.

The protein belongs to the Wnt family. In terms of processing, palmitoleoylation is required for efficient binding to frizzled receptors. Depalmitoleoylation leads to Wnt signaling pathway inhibition.

The protein resides in the secreted. Its subcellular location is the extracellular space. The protein localises to the extracellular matrix. Ligand for members of the frizzled family of seven transmembrane receptors. Probable developmental protein. May be a signaling molecule which affects the development of discrete regions of tissues. Is likely to signal over only few cell diameters. The sequence is that of Protein Wnt-7(I) (WNT-7(I)) from Eptatretus stoutii (Pacific hagfish).